A 216-amino-acid polypeptide reads, in one-letter code: Translation initiation factor 6 (216 aa).

It belongs to the eIF-6 family.

Its function is as follows. Binds to the 50S ribosomal subunit and prevents its association with the 30S ribosomal subunit to form the 70S initiation complex. This Thermoplasma acidophilum (strain ATCC 25905 / DSM 1728 / JCM 9062 / NBRC 15155 / AMRC-C165) protein is Translation initiation factor 6.